A 270-amino-acid polypeptide reads, in one-letter code: MKTIVLKLGGEIVHSPELDLVARDLRTLVDGWNRVAIVHGGGPQATALQKRLGLETRMVAGRRYTDEATLEVMKYVVAGQLNVDLCARLLANGVMPVGLHGASGHAVQATRRPPRVMQGAGPEPVDLGLVGDVVGFNLPLLGDLFERRYVPVLACLGCDDAGQALNINGDTVASQLAGALRADALVLVTSTPGVLRDVKDPSSRIPRITRAEFERLVADGTISGGMIPKLEESFEVLRGGARSVVILGKLSPGDLVAAVLEPGSAGTVLE.

Residues 41–42 (GG), R63, and N166 each bind substrate.

It belongs to the acetylglutamate kinase family. ArgB subfamily.

It localises to the cytoplasm. The catalysed reaction is N-acetyl-L-glutamate + ATP = N-acetyl-L-glutamyl 5-phosphate + ADP. Its pathway is amino-acid biosynthesis; L-arginine biosynthesis; N(2)-acetyl-L-ornithine from L-glutamate: step 2/4. Its function is as follows. Catalyzes the ATP-dependent phosphorylation of N-acetyl-L-glutamate. This Anaeromyxobacter dehalogenans (strain 2CP-C) protein is Acetylglutamate kinase.